Here is a 114-residue protein sequence, read N- to C-terminus: Phosphoribosyl-AMP cyclohydrolase (114 aa).

Asp76 lines the Mg(2+) pocket. Position 77 (Cys77) interacts with Zn(2+). The Mg(2+) site is built by Asp78 and Asp80. Residues Cys93 and Cys100 each contribute to the Zn(2+) site.

The protein belongs to the PRA-CH family. Homodimer. The cofactor is Mg(2+). Zn(2+) is required as a cofactor.

The protein localises to the cytoplasm. It catalyses the reaction 1-(5-phospho-beta-D-ribosyl)-5'-AMP + H2O = 1-(5-phospho-beta-D-ribosyl)-5-[(5-phospho-beta-D-ribosylamino)methylideneamino]imidazole-4-carboxamide. Its pathway is amino-acid biosynthesis; L-histidine biosynthesis; L-histidine from 5-phospho-alpha-D-ribose 1-diphosphate: step 3/9. Catalyzes the hydrolysis of the adenine ring of phosphoribosyl-AMP. This chain is Phosphoribosyl-AMP cyclohydrolase, found in Streptococcus gordonii (strain Challis / ATCC 35105 / BCRC 15272 / CH1 / DL1 / V288).